The sequence spans 78 residues: Major outer membrane lipoprotein Lpp (78 aa).

Positions 1–20 (MNRTKLVLGAVILASTMLAG) are cleaved as a signal peptide. The N-palmitoyl cysteine moiety is linked to residue Cys21. Cys21 carries the S-diacylglycerol cysteine lipid modification. 2 repeats span residues 24–34 (NAKIDQLSSDV) and 38–48 (NAKVDQLSNDV). The stretch at 27-75 (IDQLSSDVQTLNAKVDQLSNDVNAVRADVQAAKDDAARANQRLDNQAQA) forms a coiled coil. At Lys78 the chain carries N6-murein peptidoglycan lysine.

Belongs to the Lpp family. In terms of assembly, homotrimer.

It is found in the cell outer membrane. Its subcellular location is the secreted. The protein resides in the cell wall. Functionally, a highly abundant outer membrane lipoprotein that controls the distance between the inner and outer membranes. The only protein known to be covalently linked to the peptidoglycan network (PGN). Also non-covalently binds the PGN. The link between the cell outer membrane and PGN contributes to maintenance of the structural and functional integrity of the cell envelope, and maintains the correct distance between the PGN and the outer membrane. The polypeptide is Major outer membrane lipoprotein Lpp (Yersinia pestis).